The chain runs to 586 residues: Assimilatory ferredoxin-dependent nitrite reductase (586 aa).

The [4Fe-4S] cluster site is built by Cys-411, Cys-417, Cys-455, and Cys-459. Residue Cys-459 participates in siroheme binding. Residues 566–586 (SWYPFADEDEPPKTEQPMTSD) form a disordered region.

The protein belongs to the nitrite and sulfite reductase 4Fe-4S domain family. As to quaternary structure, monomer. It depends on siroheme as a cofactor. [4Fe-4S] cluster is required as a cofactor.

It catalyses the reaction 6 oxidized [2Fe-2S]-[ferredoxin] + NH4(+) + 2 H2O = nitrite + 6 reduced [2Fe-2S]-[ferredoxin] + 8 H(+). Its pathway is nitrogen metabolism; nitrate reduction (assimilation). With respect to regulation, inhibited by cyanide and azide. In terms of biological role, catalyzes the reduction of nitrite to ammonium in the nitrate assimilation pathway, using ferredoxin as the electron donor. Can use reduced methyl viologen but neither NADPH nor NADH as electron donors. The chain is Assimilatory ferredoxin-dependent nitrite reductase from Haloferax mediterranei (strain ATCC 33500 / DSM 1411 / JCM 8866 / NBRC 14739 / NCIMB 2177 / R-4) (Halobacterium mediterranei).